Consider the following 402-residue polypeptide: CCA-adding enzyme (402 aa).

2 residues coordinate ATP: Gly-32 and Arg-35. The CTP site is built by Gly-32 and Arg-35. Mg(2+)-binding residues include Asp-45 and Asp-47. ATP is bound by residues Arg-116, Asp-159, Arg-162, Arg-165, and Arg-168. Arg-116, Asp-159, Arg-162, Arg-165, and Arg-168 together coordinate CTP.

Belongs to the tRNA nucleotidyltransferase/poly(A) polymerase family. Bacterial CCA-adding enzyme type 3 subfamily. As to quaternary structure, homodimer. Requires Mg(2+) as cofactor.

The catalysed reaction is a tRNA precursor + 2 CTP + ATP = a tRNA with a 3' CCA end + 3 diphosphate. It catalyses the reaction a tRNA with a 3' CCA end + 2 CTP + ATP = a tRNA with a 3' CCACCA end + 3 diphosphate. Catalyzes the addition and repair of the essential 3'-terminal CCA sequence in tRNAs without using a nucleic acid template. Adds these three nucleotides in the order of C, C, and A to the tRNA nucleotide-73, using CTP and ATP as substrates and producing inorganic pyrophosphate. tRNA 3'-terminal CCA addition is required both for tRNA processing and repair. Also involved in tRNA surveillance by mediating tandem CCA addition to generate a CCACCA at the 3' terminus of unstable tRNAs. While stable tRNAs receive only 3'-terminal CCA, unstable tRNAs are marked with CCACCA and rapidly degraded. In Streptococcus pyogenes serotype M4 (strain MGAS10750), this protein is CCA-adding enzyme.